The primary structure comprises 345 residues: Platelet-derived growth factor C (345 aa).

Residues 1 to 22 (MLLLGLLLLTSALAGQRTGTRA) form the signal peptide. The segment covering 24–33 (SNLSSKLQLS) has biased composition (polar residues). Residues 24 to 45 (SNLSSKLQLSSDKEQNGVQDPR) form a disordered region. Asn-25 is a glycosylation site (N-linked (GlcNAc...) asparagine). Over residues 34–45 (SDKEQNGVQDPR) the composition is skewed to basic and acidic residues. The 118-residue stretch at 46–163 (HERVVTISGN…PGFCIHYSII (118 aa)) folds into the CUB domain. Residue Asn-55 is glycosylated (N-linked (GlcNAc...) asparagine). 4 disulfide bridges follow: Cys-104/Cys-124, Cys-250/Cys-294, Cys-280/Cys-335, and Cys-287/Cys-337.

Belongs to the PDGF/VEGF growth factor family. In terms of assembly, homodimer; disulfide-linked. Interacts with PDGFRA homodimers, and with heterodimers formed by PDGFRA and PDGFRB. Interacts (via CUB domain) with PLAT (via kringle domain). Post-translationally, proteolytic removal of the N-terminal CUB domain releasing the core domain is necessary for unmasking the receptor-binding epitopes of the core domain. Cleavage after basic residues in the hinge region (region connecting the CUB and growth factor domains) gives rise to the receptor-binding form. Cleaved by PLAT and PLG. In terms of processing, sumoylated with SUMO1. N-glycosylated. Highly expressed in the kidney and adrenal gland. In the kidney, it is expressed in arteriolar smooth muscle cells and in epithelial cells of individual segments (at protein level).

It localises to the cytoplasm. It is found in the cytosol. Its subcellular location is the secreted. The protein localises to the nucleus. The protein resides in the cytoplasmic granule. It localises to the cell membrane. Functionally, growth factor that plays an essential role in the regulation of embryonic development, cell proliferation, cell migration, survival and chemotaxis. Potent mitogen and chemoattractant for cells of mesenchymal origin. Required for normal skeleton formation during embryonic development, especially for normal development of the craniofacial skeleton and for normal development of the palate. Required for normal skin morphogenesis during embryonic development. Plays an important role in wound healing, where it appears to be involved in three stages: inflammation, proliferation and remodeling. Plays an important role in angiogenesis and blood vessel development. Involved in fibrotic processes, in which transformation of interstitial fibroblasts into myofibroblasts plus collagen deposition occurs. The CUB domain has mitogenic activity in coronary artery smooth muscle cells, suggesting a role beyond the maintenance of the latency of the PDGF domain. In the nucleus, PDGFC seems to have additional function. The sequence is that of Platelet-derived growth factor C (Pdgfc) from Rattus norvegicus (Rat).